A 304-amino-acid chain; its full sequence is ATP phosphoribosyltransferase (304 aa).

It belongs to the ATP phosphoribosyltransferase family. Long subfamily. The cofactor is Mg(2+).

The protein localises to the cytoplasm. The enzyme catalyses 1-(5-phospho-beta-D-ribosyl)-ATP + diphosphate = 5-phospho-alpha-D-ribose 1-diphosphate + ATP. It participates in amino-acid biosynthesis; L-histidine biosynthesis; L-histidine from 5-phospho-alpha-D-ribose 1-diphosphate: step 1/9. Feedback inhibited by histidine. Its function is as follows. Catalyzes the condensation of ATP and 5-phosphoribose 1-diphosphate to form N'-(5'-phosphoribosyl)-ATP (PR-ATP). Has a crucial role in the pathway because the rate of histidine biosynthesis seems to be controlled primarily by regulation of HisG enzymatic activity. The chain is ATP phosphoribosyltransferase from Xylella fastidiosa (strain 9a5c).